We begin with the raw amino-acid sequence, 89 residues long: Small ribosomal subunit protein uS17 (89 aa).

It belongs to the universal ribosomal protein uS17 family. In terms of assembly, part of the 30S ribosomal subunit.

Its function is as follows. One of the primary rRNA binding proteins, it binds specifically to the 5'-end of 16S ribosomal RNA. The protein is Small ribosomal subunit protein uS17 of Baumannia cicadellinicola subsp. Homalodisca coagulata.